We begin with the raw amino-acid sequence, 533 residues long: Glucomannan 4-beta-mannosyltransferase 9 (533 aa).

A helical membrane pass occupies residues 37–57 (IVPALRLGVYICLTMSVMLFV). Aspartate 136 is an active-site residue. 2 residues coordinate substrate: aspartate 195 and aspartate 197. The active site involves aspartate 289. Helical transmembrane passes span 368–388 (LVAH…TVLV), 404–426 (VITL…WILF), 483–503 (VLEL…AFFG), and 510–530 (YLFA…GTIV).

This sequence belongs to the glycosyltransferase 2 family. Plant cellulose synthase-like A subfamily. As to expression, expressed in cotyledons at the base of the hypocotyls, in root elongation zone, lateral root primordia, vascular system of young leaves, abscission zone of the pedicle,.

The protein localises to the golgi apparatus membrane. It catalyses the reaction GDP-mannose + (glucomannan)n = GDP + (glucomannan)n+1.. Possesses glucomannan synthase and mannan synthase activities in vitro. Mannan synthase consists of a 4-beta-mannosyltransferase activity on mannan using GDP-mannose. The beta-1,4-mannan product is the backbone for galactomannan synthesis by galactomannan galactosyltransferase. Galactomannan is a noncellulosic polysaccharides of plant cell wall. Required for lateral root development. The sequence is that of Glucomannan 4-beta-mannosyltransferase 9 from Arabidopsis thaliana (Mouse-ear cress).